A 415-amino-acid chain; its full sequence is Gamma-glutamyl phosphate reductase (415 aa).

Belongs to the gamma-glutamyl phosphate reductase family.

The protein localises to the cytoplasm. It carries out the reaction L-glutamate 5-semialdehyde + phosphate + NADP(+) = L-glutamyl 5-phosphate + NADPH + H(+). It functions in the pathway amino-acid biosynthesis; L-proline biosynthesis; L-glutamate 5-semialdehyde from L-glutamate: step 2/2. Functionally, catalyzes the NADPH-dependent reduction of L-glutamate 5-phosphate into L-glutamate 5-semialdehyde and phosphate. The product spontaneously undergoes cyclization to form 1-pyrroline-5-carboxylate. In Xylella fastidiosa (strain 9a5c), this protein is Gamma-glutamyl phosphate reductase.